Here is a 224-residue protein sequence, read N- to C-terminus: Synaptogyrin-2 (224 aa).

Position 1 is an N-acetylmethionine (Met-1). Residue Ser-3 is modified to Phosphoserine. The region spanning 20–171 (FLKQPQVVVR…LAFLAYQRYK (152 aa)) is the MARVEL domain. The next 4 membrane-spanning stretches (helical) occupy residues 26 to 46 (VVVRAVCLVFALIVFSCIFGE), 73 to 93 (AIGVLAFLASAFFFVVDIYFP), 105 to 125 (VIGDLLFSALWTFLWFVGFCF), and 147 to 167 (AAITFSFFSIFSWCVLAFLAY). Residues 196–224 (PGVPADTYQQPPFTQNAESTEGYQPPPVY) form a disordered region. The span at 202-217 (TYQQPPFTQNAESTEG) shows a compositional bias: polar residues.

The protein belongs to the synaptogyrin family. In terms of processing, may be tyrosine phosphorylated by Src.

The protein localises to the cytoplasmic vesicle membrane. It localises to the cytoplasmic vesicle. It is found in the secretory vesicle. Its subcellular location is the synaptic vesicle membrane. Functionally, may play a role in regulated exocytosis. In neuronal cells, modulates the localization of synaptophysin/SYP into synaptic-like microvesicles and may therefore play a role in the formation and/or the maturation of this vesicles. May also play a role in GLUT4 storage and transport to the plasma membrane. The protein is Synaptogyrin-2 of Bos taurus (Bovine).